Here is a 149-residue protein sequence, read N- to C-terminus: Urease accessory protein UreE (149 aa).

It belongs to the UreE family.

Its subcellular location is the cytoplasm. Functionally, involved in urease metallocenter assembly. Binds nickel. Probably functions as a nickel donor during metallocenter assembly. The polypeptide is Urease accessory protein UreE (Prochlorococcus marinus (strain MIT 9312)).